A 363-amino-acid polypeptide reads, in one-letter code: Aminomethyltransferase (363 aa).

It belongs to the GcvT family. The glycine cleavage system is composed of four proteins: P, T, L and H.

The catalysed reaction is N(6)-[(R)-S(8)-aminomethyldihydrolipoyl]-L-lysyl-[protein] + (6S)-5,6,7,8-tetrahydrofolate = N(6)-[(R)-dihydrolipoyl]-L-lysyl-[protein] + (6R)-5,10-methylene-5,6,7,8-tetrahydrofolate + NH4(+). Functionally, the glycine cleavage system catalyzes the degradation of glycine. The chain is Aminomethyltransferase from Thermotoga neapolitana (strain ATCC 49049 / DSM 4359 / NBRC 107923 / NS-E).